A 250-amino-acid chain; its full sequence is Ubiquinone/menaquinone biosynthesis C-methyltransferase UbiE (250 aa).

S-adenosyl-L-methionine contacts are provided by residues threonine 73, aspartate 94, 122–123 (NS), and serine 139.

The protein belongs to the class I-like SAM-binding methyltransferase superfamily. MenG/UbiE family.

It carries out the reaction a 2-demethylmenaquinol + S-adenosyl-L-methionine = a menaquinol + S-adenosyl-L-homocysteine + H(+). It catalyses the reaction a 2-methoxy-6-(all-trans-polyprenyl)benzene-1,4-diol + S-adenosyl-L-methionine = a 5-methoxy-2-methyl-3-(all-trans-polyprenyl)benzene-1,4-diol + S-adenosyl-L-homocysteine + H(+). It functions in the pathway quinol/quinone metabolism; menaquinone biosynthesis; menaquinol from 1,4-dihydroxy-2-naphthoate: step 2/2. It participates in cofactor biosynthesis; ubiquinone biosynthesis. Functionally, methyltransferase required for the conversion of demethylmenaquinol (DMKH2) to menaquinol (MKH2) and the conversion of 2-polyprenyl-6-methoxy-1,4-benzoquinol (DDMQH2) to 2-polyprenyl-3-methyl-6-methoxy-1,4-benzoquinol (DMQH2). In Wigglesworthia glossinidia brevipalpis, this protein is Ubiquinone/menaquinone biosynthesis C-methyltransferase UbiE.